Reading from the N-terminus, the 648-residue chain is Probable alpha-galactosidase D (648 aa).

Residues 1-17 form the signal peptide; the sequence is MESIVWLLLLSPALVAG. Residues Asn-84 and Asn-90 are each glycosylated (N-linked (GlcNAc...) asparagine). Cys-123 and Cys-156 are joined by a disulfide. Asp-154 functions as the Nucleophile in the catalytic mechanism. 199–203 contributes to the substrate binding site; the sequence is EWGID. Asp-221 functions as the Proton donor in the catalytic mechanism. Residues Asn-339, Asn-505, and Asn-572 are each glycosylated (N-linked (GlcNAc...) asparagine).

The protein belongs to the glycosyl hydrolase 27 family.

It localises to the secreted. It carries out the reaction Hydrolysis of terminal, non-reducing alpha-D-galactose residues in alpha-D-galactosides, including galactose oligosaccharides, galactomannans and galactolipids.. In terms of biological role, hydrolyzes a variety of simple alpha-D-galactoside as well as more complex molecules such as oligosaccharides and polysaccharides. The polypeptide is Probable alpha-galactosidase D (aglD) (Neosartorya fischeri (strain ATCC 1020 / DSM 3700 / CBS 544.65 / FGSC A1164 / JCM 1740 / NRRL 181 / WB 181) (Aspergillus fischerianus)).